Reading from the N-terminus, the 937-residue chain is AP-2 complex subunit beta (937 aa).

N-acetylthreonine is present on Thr-2. The residue at position 4 (Ser-4) is a Phosphoserine. Lys-265 is subject to N6-acetyllysine. Phosphotyrosine; by SRC is present on Tyr-737. Residues 841–937 form an interaction with ARRB1 region; the sequence is WKDIPNENEL…YQVYDSILKN (97 aa). A Phosphotyrosine modification is found at Tyr-928.

Belongs to the adaptor complexes large subunit family. In terms of assembly, adaptor protein complex 2 (AP-2) is a heterotetramer composed of two large adaptins (alpha-type subunit AP2A1 or AP2A2 and beta-type subunit AP2B1), a medium adaptin (mu-type subunit AP2M1) and a small adaptin (sigma-type subunit AP2S1). Interacts with EPN1. Interacts with EPS15; clathrin competes with EPS15. Interacts with SNAP91; clathrin competes with SNAP91. Interacts with CLTC; clathrin competes with EPS15, SNAP91 and PIP5K1C. Interacts with LDLRAP1. Interacts with AMPH and BIN1. Interacts with ARF6 (GDP-bound). Interacts (dephosphorylated at Tyr-737) with ARRB1; phosphorylation of AP2B1 at Tyr-737 disrupts the interaction. Interacts with SLC2A8. Interacts with SCYL1 and SCYL2. Interacts with TGFBR1 and TGFBR2. Interacts with PIP5K1C; clathrin competes with PIP5K1C. Interacts with DENND1B, but not with DENND1A, nor DENND1C. Interacts with FCHO1. Interacts with RFTN1. Interacts with KIAA1107. Together with AP2A1 or AP2A2 and AP2M1, it interacts with ADAM10; this interaction facilitates ADAM10 endocytosis from the plasma membrane during long-term potentiation in hippocampal neurons. In terms of processing, phosphorylation at Tyr-737 by SRC occurs at the plasma membrane in clathrin-coated vesicles (CCVs). Expressed in the brain (at protein level).

The protein localises to the cell membrane. It localises to the membrane. It is found in the coated pit. In terms of biological role, component of the adaptor protein complex 2 (AP-2). Adaptor protein complexes function in protein transport via transport vesicles in different membrane traffic pathways. Adaptor protein complexes are vesicle coat components and appear to be involved in cargo selection and vesicle formation. AP-2 is involved in clathrin-dependent endocytosis in which cargo proteins are incorporated into vesicles surrounded by clathrin (clathrin-coated vesicles, CCVs) which are destined for fusion with the early endosome. The clathrin lattice serves as a mechanical scaffold but is itself unable to bind directly to membrane components. Clathrin-associated adaptor protein (AP) complexes which can bind directly to both the clathrin lattice and to the lipid and protein components of membranes are considered to be the major clathrin adaptors contributing the CCV formation. AP-2 also serves as a cargo receptor to selectively sort the membrane proteins involved in receptor-mediated endocytosis. AP-2 seems to play a role in the recycling of synaptic vesicle membranes from the presynaptic surface. AP-2 recognizes Y-X-X-[FILMV] (Y-X-X-Phi) and [ED]-X-X-X-L-[LI] endocytosis signal motifs within the cytosolic tails of transmembrane cargo molecules. AP-2 may also play a role in maintaining normal post-endocytic trafficking through the ARF6-regulated, non-clathrin pathway. During long-term potentiation in hippocampal neurons, AP-2 is responsible for the endocytosis of ADAM10. The AP-2 beta subunit acts via its C-terminal appendage domain as a scaffolding platform for endocytic accessory proteins; at least some clathrin-associated sorting proteins (CLASPs) are recognized by their [DE]-X(1,2)-F-X-X-[FL]-X-X-X-R motif. The AP-2 beta subunit binds to clathrin heavy chain, promoting clathrin lattice assembly; clathrin displaces at least some CLASPs from AP2B1 which probably then can be positioned for further coat assembly. The polypeptide is AP-2 complex subunit beta (AP2B1) (Homo sapiens (Human)).